The chain runs to 357 residues: Peptide chain release factor 1 (357 aa).

Glutamine 232 is modified (N5-methylglutamine). The segment covering 282–291 has biased composition (basic and acidic residues); sequence KQRAEQEAAR. A disordered region spans residues 282–302; sequence KQRAEQEAARRSQVGTGDRSE.

Belongs to the prokaryotic/mitochondrial release factor family. In terms of processing, methylated by PrmC. Methylation increases the termination efficiency of RF1.

Its subcellular location is the cytoplasm. In terms of biological role, peptide chain release factor 1 directs the termination of translation in response to the peptide chain termination codons UAG and UAA. This chain is Peptide chain release factor 1, found in Solidesulfovibrio magneticus (strain ATCC 700980 / DSM 13731 / RS-1) (Desulfovibrio magneticus).